Reading from the N-terminus, the 378-residue chain is Circumsporozoite protein (378 aa).

A signal peptide spans 1–22 (MKNFNLLAVSSILLVDLFPTHC). A disordered region spans residues 50–291 (AQVRQSASRG…GQGQNNEGAN (242 aa)). Basic and acidic residues-rich tracts occupy residues 66–92 (PKNE…ENKL) and 101–126 (ARAE…DGAR). The interval 80–88 (KKVEPKKPR) is required for the binding to heparan sulfate proteoglycans (HSPGs) on the surface of host hepatocytes. The tract at residues 91-95 (KLKQP) is region I; contains the proteolytic cleavage site. 24 tandem repeats follow at residues 99-104 (DGARAE), 105-110 (DGARAE), 111-116 (DGARAE), 117-122 (DGARAE), 123-128 (DGARAA), 129-134 (DGARAA), 135-140 (DGARAA), 141-146 (DGARAE), 147-152 (DGARAE), 153-158 (DGARAE), 159-164 (DGARAA), 165-170 (DGARAA), 171-176 (DGARAA), 177-182 (DGARAA), 183-188 (DGARAA), 189-194 (DGARAA), 195-200 (DGARAA), 201-206 (DGARAE), 212-222 (GNREGGQAGAG), 223-233 (GNQAGGQAGAG), 234-244 (GNQAGGQAGAG), 245-255 (GNQAGGQAGAG), 256-266 (GNQAGGQAGAG), and 267-277 (GNRAGGQAGAG). The 18 X 6 AA tandem repeats of D-G-A-R-A-[EA] stretch occupies residues 99–206 (DGARAEDGAR…ARAADGARAE (108 aa)). Positions 127–140 (AADGARAADGARAA) are enriched in low complexity. Residues 141-162 (DGARAEDGARAEDGARAEDGAR) are compositionally biased toward basic and acidic residues. Residues 163 to 200 (AADGARAADGARAADGARAADGARAADGARAADGARAA) show a composition bias toward low complexity. Residues 212 to 277 (GNREGGQAGA…NRAGGQAGAG (66 aa)) are 6 X 11 AA tandem repeats of G-N-[QR]-[AE]-G-G-Q-A-G-A-G. Gly residues predominate over residues 214-283 (REGGQAGAGG…AGAGDAGAGQ (70 aa)). The TSP type-1 domain maps to 304 to 356 (KIRSTIGVEWSPCTVTCGKGVRMRRKVSAANKKPEELDVNDLETEVCTMDKCA). 2 disulfide bridges follow: Cys-316/Cys-350 and Cys-320/Cys-355. Thr-319 is a glycosylation site (O-linked (Fuc) threonine). Cys-355 is lipidated: GPI-anchor amidated cysteine. A propeptide spans 356 to 378 (AGIFNVVSNSLGLVILLVLALFN) (removed in mature form).

The protein belongs to the plasmodium circumsporozoite protein family. Post-translationally, during host cell invasion, proteolytically cleaved at the cell membrane in the region I by a papain-like cysteine protease of parasite origin. Cleavage is triggered by the sporozoite contact with highly sulfated heparan sulfate proteoglycans (HSPGs) present on the host hepatocyte cell surface. Cleavage exposes the TSP type-1 (TSR) domain and is required for productive invasion of host hepatocytes but not for adhesion to the host cell membrane. Cleavage is dispensable for sporozoite development in the oocyst, motility and for traversal of host and vector cells. In terms of processing, O-glycosylated; maybe by POFUT2.

It localises to the cell membrane. Its subcellular location is the cytoplasm. Essential sporozoite protein. In the mosquito vector, required for sporozoite development in the oocyst, migration through the vector hemolymph and entry into the vector salivary glands. In the vertebrate host, required for sporozoite migration through the host dermis and infection of host hepatocytes. Binds to highly sulfated heparan sulfate proteoglycans (HSPGs) on the surface of host hepatocytes. Functionally, in the vertebrate host, binds to highly sulfated heparan sulfate proteoglycans (HSPGs) on the surface of host hepatocytes and is required for sporozoite invasion of the host hepatocytes. This chain is Circumsporozoite protein, found in Plasmodium cynomolgi (strain London).